A 676-amino-acid chain; its full sequence is Multisubstrate pseudouridine synthase 7 (676 aa).

2 disordered regions span residues 1-27 and 87-110; these read MSDSSEATVKRPLDAHVGPSENAAKKL and KMPKKPQRSKEEVNAEKESEAARR. S2 is subject to N-acetylserine. Residues 94–110 show a composition bias toward basic and acidic residues; the sequence is RSKEEVNAEKESEAARR. D256 (nucleophile) is an active-site residue. One can recognise a TRUD domain in the interval 338 to 582; sequence GFINYFGMQR…AGSYRTVIQK (245 aa).

This sequence belongs to the pseudouridine synthase TruD family.

It is found in the nucleus. The protein resides in the cytoplasm. The enzyme catalyses uridine in 5S rRNA = pseudouridine in 5S rRNA. It carries out the reaction uridine in snRNA = pseudouridine in snRNA. It catalyses the reaction uridine(13) in tRNA = pseudouridine(13) in tRNA. The catalysed reaction is a uridine in mRNA = a pseudouridine in mRNA. Catalyzes pseudouridylation at position 35 in U2 snRNA stem-loop II region which induces particular conformation of the mRNA-U2 snRNA duplex and places the nucleophile in an accessible position for the first step of splicing. Also catalyzes pseudouridylation at position 56 in U2 snRNA. Also catalyzes pseudouridylation at position 50 in 5S rRNA, position 13 in cytoplasmic tRNAs, and position 35 in pre-tRNA(Tyr). Pseudouridine residues in tRNAs may stabilize the local RNA conformation, favor interactions with protein partners and play an important role in the stabilization of the codon-anticodon interaction with mRNA. Also catalyzes pseudouridylation of mRNAs in response to heat shock: mediates pseudouridylation of mRNAs with the consensus sequence 5'-UGUAR-3'. This is Multisubstrate pseudouridine synthase 7 from Saccharomyces cerevisiae (strain ATCC 204508 / S288c) (Baker's yeast).